The chain runs to 115 residues: NTF2-related export protein 1 (115 aa).

The NTF2 domain maps to 7–115 (YAQEFVQRYY…LVLRSSTNFL (109 aa)).

The protein localises to the nucleus. Functionally, stimulator of protein export for NES-containing proteins. Also plays a role in mRNA nuclear export. In Schizosaccharomyces pombe (strain 972 / ATCC 24843) (Fission yeast), this protein is NTF2-related export protein 1 (nxt1).